A 397-amino-acid polypeptide reads, in one-letter code: Phosphoglycerate kinase (397 aa).

Residues 21–23 (DFN), Arg36, 59–62 (HCGR), Arg118, and Arg151 each bind substrate. ATP contacts are provided by residues Lys201, Glu323, and 353–356 (GGDT).

This sequence belongs to the phosphoglycerate kinase family. As to quaternary structure, monomer.

The protein resides in the cytoplasm. The catalysed reaction is (2R)-3-phosphoglycerate + ATP = (2R)-3-phospho-glyceroyl phosphate + ADP. It functions in the pathway carbohydrate degradation; glycolysis; pyruvate from D-glyceraldehyde 3-phosphate: step 2/5. This is Phosphoglycerate kinase from Bartonella quintana (strain Toulouse) (Rochalimaea quintana).